We begin with the raw amino-acid sequence, 745 residues long: MNLNDRVEGIGNERSIVAKSTERKNKIPPSLKLSPVESVGEKSPTPATVYDLFKKYHKSDSVKPTEEDNMNVGFDKLSTDEKNGFLRKLQMLTVGSKKSSKVDESTPSPANRLLKKIVPSRRTSTEHPNSSNRMHIFGSSRTTKKSIDSERNSQRKKSARRLNFERDAEQKKDSTKTNNSSFVAEMTREYEKIVISKGAPVPINKANRNLYRNPRGSLETPTDSPQKGFSSSTESSPSDSMNQFPSREHFTSANEESPMKRKNFQQEHGNKNRDSDATWFGELPPRDYTSPTFSRKIFVGGVPWDITEAALKDSFGEFGSCAVEWPGQEARYRSGQSNLAPSNGSLRAQTKYTGQAATGYVYMIFEDERAVASLLHECSQEIGGAGEWYFKIRAQRSKSTEIRQVQIIPWVTSDSMFCEDDTLLETGIEPKRTVFVGALHGMMTAQVLHSIMEDCFGAVECVQLDTDKFKYPIGSGRVTFREHGAYFKAIEMGYLHVYTSKFRKRVQIDPFLESTCCMVCNSQSAHCFCRNKNCFKYYCHNCWALDHGKDDDQEVHIPVIVPSSASKAFPGATTRRSQVSSSLSLKNGSNNSQVNNSIPHFPSAGFPIIVGAPAQTLSALYGYIQNGQQLLKPAVFEPPMTPSPSEINKNRRSFTEFSTPPTVFFNSTPVISPQKSVSDGSPLPAYYNSAAFLTPPPTYYGSPNHPTSSNISQPQQPYYGANLYYGFIPPQQHPSAMMRSPNYGQ.

Disordered regions lie at residues Met1–Thr45, Val94–Ser180, and Asn204–Leu283. The span at Leu162–Thr175 shows a compositional bias: basic and acidic residues. Residues Glu219–Phe229 are compositionally biased toward polar residues. Positions Ser230–Ser240 are enriched in low complexity. Positions Met241–Glu255 are enriched in polar residues. Over residues Phe264–Asp276 the composition is skewed to basic and acidic residues. The 23-residue stretch at Ile297–Gly319 folds into the RRM domain.

Cytoplasmic polyadenylation element binding protein that binds to and regulates the translation of specific mRNAs. May not be required for oogenesis. This chain is Cytoplasmic polyadenylation element-binding protein 3 (cpb-3), found in Caenorhabditis elegans.